Consider the following 100-residue polypeptide: UPF0213 protein YhbQ (100 aa).

The GIY-YIG domain occupies 2 to 77; that stretch reads TPWYLYLIRT…KQLTKRQKER (76 aa).

It belongs to the UPF0213 family.

The polypeptide is UPF0213 protein YhbQ (Salmonella arizonae (strain ATCC BAA-731 / CDC346-86 / RSK2980)).